An 86-amino-acid chain; its full sequence is UPF0180 protein CA_C1486 (86 aa).

It belongs to the UPF0180 family.

The polypeptide is UPF0180 protein CA_C1486 (Clostridium acetobutylicum (strain ATCC 824 / DSM 792 / JCM 1419 / IAM 19013 / LMG 5710 / NBRC 13948 / NRRL B-527 / VKM B-1787 / 2291 / W)).